The chain runs to 1279 residues: ATP-dependent helicase/nuclease subunit A (1279 aa).

Residues 4 to 499 (TKWTDEQRQA…VKLFKNFRSR (496 aa)) enclose the UvrD-like helicase ATP-binding domain. Residue 25–32 (AGAGAGKT) participates in ATP binding. One can recognise a UvrD-like helicase C-terminal domain in the interval 526–853 (EEALKVGASY…RIMSIHKSKG (328 aa)).

This sequence belongs to the helicase family. AddA subfamily. Heterodimer of AddA and AddB/RexB. Requires Mg(2+) as cofactor.

The enzyme catalyses Couples ATP hydrolysis with the unwinding of duplex DNA by translocating in the 3'-5' direction.. It carries out the reaction ATP + H2O = ADP + phosphate + H(+). Its function is as follows. The heterodimer acts as both an ATP-dependent DNA helicase and an ATP-dependent, dual-direction single-stranded exonuclease. Recognizes the chi site generating a DNA molecule suitable for the initiation of homologous recombination. The AddA nuclease domain is required for chi fragment generation; this subunit has the helicase and 3' -&gt; 5' nuclease activities. This is ATP-dependent helicase/nuclease subunit A from Clostridium botulinum (strain Hall / ATCC 3502 / NCTC 13319 / Type A).